A 1426-amino-acid chain; its full sequence is B-cell CLL/lymphoma 9 protein (1426 aa).

Polar residues-rich tracts occupy residues 1–21 (MHSS…SSPK) and 34–46 (MSPS…DSKF). The disordered stretch occupies residues 1–173 (MHSSNPKVRS…TEPTPAQKTP (173 aa)). Positions 47 to 62 (SNQGKQGGSASQSQPS) are enriched in low complexity. A compositionally biased stretch (gly residues) spans 78-94 (GPGGSMGLKNGAGNGAK). Composition is skewed to basic and acidic residues over residues 100-112 (ERSI…DQRD) and 120-135 (SDIK…KSQD). Ser-104 carries the post-translational modification Phosphoserine. The span at 136-170 (SQHTPHSMTPSNATAPRSSTPSHGQTTATEPTPAQ) shows a compositional bias: polar residues. Position 157 is a phosphoserine (Ser-157). Thr-172 is subject to Phosphothreonine. The segment at 177-205 (VYVFSTEMANKAAEAVLKGQVETIVSFHI) is interaction with PYGO1. Over residues 207–226 (NISNNKTERSTAPLNTQISA) the composition is skewed to polar residues. Disordered stretches follow at residues 207–439 (NISN…RDVP) and 597–625 (PKIP…PNPQ). Pro residues-rich tracts occupy residues 232-241 (KPLPQQPPAP) and 256-272 (PTPP…APPR). The segment covering 304–320 (GPNSTPNNRAVTPVSQG) has biased composition (polar residues). Thr-315 carries the phosphothreonine modification. Residues Ser-318 and Ser-352 each carry the phosphoserine modification. The segment covering 355-380 (QLEHRERSLQTLRDIQRMLFPDEKEF) has biased composition (basic and acidic residues). Residues 358 to 374 (HRERSLQTLRDIQRMLF) are interaction with CTNNB1. The segment covering 382–392 (GAQSGGPQQNP) has biased composition (polar residues). A phosphoserine mark is found at Ser-687 and Ser-689. Residues 787 to 895 (MSQGPGSNSG…PQTPSQLAGM (109 aa)) form a disordered region. An Asymmetric dimethylarginine modification is found at Arg-801. Residues 823-836 (NPSSNPTSLNTAPP) are compositionally biased toward low complexity. Lys-844 bears the N6-acetyllysine mark. The segment covering 867–891 (TMHQVQSPMLGSPSGNLKSPQTPSQ) has biased composition (polar residues). Phosphoserine occurs at positions 907 and 917. Disordered stretches follow at residues 910–1002 (VLGS…PTLS), 1032–1052 (VASS…SMNN), 1152–1203 (PFPH…GPDS), and 1253–1275 (PRGE…HMQG). The segment covering 937–947 (PKPPLQSPGIP) has biased composition (pro residues). Residues 1158 to 1176 (PSGGQGSFPGGMGFPGEGP) show a composition bias toward gly residues.

Belongs to the BCL9 family. As to quaternary structure, binds to beta-catenin (CTNNB1), PYGO1 and PYGO2; the interaction with PYGO1 increases PYGO1 affinity to histone H3 methylated at 'Lys 4'. Detected at low levels in thymus, prostate, testis, ovary and small intestine, and at lower levels in spleen, colon and blood.

It localises to the nucleus. Involved in signal transduction through the Wnt pathway. Promotes beta-catenin's transcriptional activity. The sequence is that of B-cell CLL/lymphoma 9 protein (BCL9) from Homo sapiens (Human).